A 246-amino-acid chain; its full sequence is Virulence plasmid protein pGP6-D (246 aa).

Belongs to the UPF0137 (pGP6-D) family.

The polypeptide is Virulence plasmid protein pGP6-D (Chlamydia psittaci (Chlamydophila psittaci)).